A 138-amino-acid polypeptide reads, in one-letter code: Cysteine desulfuration protein SufE (138 aa).

The active-site Cysteine persulfide intermediate is C51.

Belongs to the SufE family. As to quaternary structure, homodimer. Interacts with SufS.

The protein resides in the cytoplasm. Its pathway is cofactor biosynthesis; iron-sulfur cluster biosynthesis. Functionally, participates in cysteine desulfuration mediated by SufS. Cysteine desulfuration mobilizes sulfur from L-cysteine to yield L-alanine and constitutes an essential step in sulfur metabolism for biosynthesis of a variety of sulfur-containing biomolecules. Functions as a sulfur acceptor for SufS, by mediating the direct transfer of the sulfur atom from the S-sulfanylcysteine of SufS, an intermediate product of cysteine desulfuration process. This chain is Cysteine desulfuration protein SufE, found in Photorhabdus laumondii subsp. laumondii (strain DSM 15139 / CIP 105565 / TT01) (Photorhabdus luminescens subsp. laumondii).